The following is a 103-amino-acid chain: Large ribosomal subunit protein uL24 (103 aa).

This sequence belongs to the universal ribosomal protein uL24 family. As to quaternary structure, part of the 50S ribosomal subunit.

Its function is as follows. One of two assembly initiator proteins, it binds directly to the 5'-end of the 23S rRNA, where it nucleates assembly of the 50S subunit. In terms of biological role, one of the proteins that surrounds the polypeptide exit tunnel on the outside of the subunit. This Bacillus licheniformis (strain ATCC 14580 / DSM 13 / JCM 2505 / CCUG 7422 / NBRC 12200 / NCIMB 9375 / NCTC 10341 / NRRL NRS-1264 / Gibson 46) protein is Large ribosomal subunit protein uL24.